The primary structure comprises 579 residues: Nuclear hormone receptor family member nhr-22 (579 aa).

The nuclear receptor DNA-binding region spans 93–173 (SRSCHVCSSP…AGMRRELVQA (81 aa)). 2 consecutive NR C4-type zinc fingers follow at residues 96 to 117 (CHVCSSPTANTLHFGGRSCKAC) and 133 to 161 (CIGTGDDTNPCRTHYELRMICRHCRFIKC). Positions 233–242 (LSPDPSSSQP) are enriched in low complexity. The tract at residues 233-256 (LSPDPSSSQPLDMTVTPPPLHRST) is disordered. The region spanning 304–577 (EVENKIFELV…SIMYDLLSFR (274 aa)) is the NR LBD domain.

The protein belongs to the nuclear hormone receptor family.

Its subcellular location is the nucleus. Orphan nuclear receptor. This is Nuclear hormone receptor family member nhr-22 (nhr-22) from Caenorhabditis elegans.